We begin with the raw amino-acid sequence, 207 residues long: ATP-dependent dethiobiotin synthetase BioD (207 aa).

13–18 (EVGKTV) is an ATP binding site. Thr-17 contributes to the Mg(2+) binding site. The active site involves Lys-33. ATP contacts are provided by residues Asp-44 and 100–103 (EGAG). The Mg(2+) site is built by Asp-44 and Glu-100.

It belongs to the dethiobiotin synthetase family. In terms of assembly, homodimer. Requires Mg(2+) as cofactor.

It localises to the cytoplasm. It carries out the reaction (7R,8S)-7,8-diammoniononanoate + CO2 + ATP = (4R,5S)-dethiobiotin + ADP + phosphate + 3 H(+). Its pathway is cofactor biosynthesis; biotin biosynthesis; biotin from 7,8-diaminononanoate: step 1/2. In terms of biological role, catalyzes a mechanistically unusual reaction, the ATP-dependent insertion of CO2 between the N7 and N8 nitrogen atoms of 7,8-diaminopelargonic acid (DAPA, also called 7,8-diammoniononanoate) to form a ureido ring. This Christiangramia forsetii (strain DSM 17595 / CGMCC 1.15422 / KT0803) (Gramella forsetii) protein is ATP-dependent dethiobiotin synthetase BioD.